A 268-amino-acid polypeptide reads, in one-letter code: UPF0328 protein ECU03_0040 (268 aa).

This sequence belongs to the UPF0328 family.

The sequence is that of UPF0328 protein ECU03_0040 from Encephalitozoon cuniculi (strain GB-M1) (Microsporidian parasite).